Consider the following 353-residue polypeptide: UDP-N-acetylglucosamine--N-acetylmuramyl-(pentapeptide) pyrophosphoryl-undecaprenol N-acetylglucosamine transferase (353 aa).

UDP-N-acetyl-alpha-D-glucosamine-binding positions include 10-12, N124, S183, and Q283; that span reads TGG.

This sequence belongs to the glycosyltransferase 28 family. MurG subfamily.

It localises to the cell inner membrane. It catalyses the reaction di-trans,octa-cis-undecaprenyl diphospho-N-acetyl-alpha-D-muramoyl-L-alanyl-D-glutamyl-meso-2,6-diaminopimeloyl-D-alanyl-D-alanine + UDP-N-acetyl-alpha-D-glucosamine = di-trans,octa-cis-undecaprenyl diphospho-[N-acetyl-alpha-D-glucosaminyl-(1-&gt;4)]-N-acetyl-alpha-D-muramoyl-L-alanyl-D-glutamyl-meso-2,6-diaminopimeloyl-D-alanyl-D-alanine + UDP + H(+). The protein operates within cell wall biogenesis; peptidoglycan biosynthesis. In terms of biological role, cell wall formation. Catalyzes the transfer of a GlcNAc subunit on undecaprenyl-pyrophosphoryl-MurNAc-pentapeptide (lipid intermediate I) to form undecaprenyl-pyrophosphoryl-MurNAc-(pentapeptide)GlcNAc (lipid intermediate II). In Helicobacter pylori (strain J99 / ATCC 700824) (Campylobacter pylori J99), this protein is UDP-N-acetylglucosamine--N-acetylmuramyl-(pentapeptide) pyrophosphoryl-undecaprenol N-acetylglucosamine transferase.